Reading from the N-terminus, the 539-residue chain is Protoporphyrinogen oxidase (539 aa).

Residues Gly-18 to Gly-23, Glu-43 to Ser-44, Trp-51, Gly-70 to Thr-73, Val-300, and Pro-521 to Val-523 each bind FAD.

It belongs to the protoporphyrinogen/coproporphyrinogen oxidase family. Protoporphyrinogen oxidase subfamily. FAD serves as cofactor.

It localises to the mitochondrion inner membrane. The catalysed reaction is protoporphyrinogen IX + 3 O2 = protoporphyrin IX + 3 H2O2. The protein operates within porphyrin-containing compound metabolism; protoporphyrin-IX biosynthesis; protoporphyrin-IX from protoporphyrinogen-IX: step 1/1. In terms of biological role, catalyzes the 6-electron oxidation of protoporphyrinogen-IX to form protoporphyrin-IX. The sequence is that of Protoporphyrinogen oxidase from Saccharomyces cerevisiae (strain ATCC 204508 / S288c) (Baker's yeast).